The following is a 242-amino-acid chain: Glutathione S-transferase 3 (242 aa).

The 79-residue stretch at 1–79 (MIVLHHLKNS…HLVRKYGPSF (79 aa)) folds into the GST N-terminal domain. One can recognise a GST C-terminal domain in the interval 85-234 (DVAELEKYEL…ERYSHPPTPP (150 aa)). Serine 228 carries the post-translational modification Phosphoserine. Threonine 232 bears the Phosphothreonine mark.

The protein belongs to the GST superfamily. In terms of assembly, interacts with sad1.

The protein localises to the cytoplasm. It catalyses the reaction RX + glutathione = an S-substituted glutathione + a halide anion + H(+). May have a role in the detoxification of various heavy metals. The chain is Glutathione S-transferase 3 (gst3) from Schizosaccharomyces pombe (strain 972 / ATCC 24843) (Fission yeast).